Consider the following 412-residue polypeptide: Tyrosine--tRNA ligase (412 aa).

Residues 56 to 65 (PSAPDVHIGH) carry the 'HIGH' region motif. Residues 240 to 244 (KMSKS) carry the 'KMSKS' region motif. Lysine 243 contacts ATP. In terms of domain architecture, S4 RNA-binding spans 351-412 (VWIVDLLVTL…GKRKFKKLVR (62 aa)).

The protein belongs to the class-I aminoacyl-tRNA synthetase family. TyrS type 2 subfamily. Homodimer.

The protein localises to the cytoplasm. It catalyses the reaction tRNA(Tyr) + L-tyrosine + ATP = L-tyrosyl-tRNA(Tyr) + AMP + diphosphate + H(+). Functionally, catalyzes the attachment of tyrosine to tRNA(Tyr) in a two-step reaction: tyrosine is first activated by ATP to form Tyr-AMP and then transferred to the acceptor end of tRNA(Tyr). This chain is Tyrosine--tRNA ligase, found in Halalkalibacterium halodurans (strain ATCC BAA-125 / DSM 18197 / FERM 7344 / JCM 9153 / C-125) (Bacillus halodurans).